Reading from the N-terminus, the 264-residue chain is Zinc import ATP-binding protein ZnuC (264 aa).

The 216-residue stretch at 20–235 (VQLKNIEVTF…PNFIHFFGDQ (216 aa)) folds into the ABC transporter domain. ATP is bound at residue 52 to 59 (GPNGGGKS).

The protein belongs to the ABC transporter superfamily. Zinc importer (TC 3.A.1.15.5) family. As to quaternary structure, the complex is composed of two ATP-binding proteins (ZnuC), two transmembrane proteins (ZnuB) and a solute-binding protein (ZnuA).

It is found in the cell inner membrane. The catalysed reaction is Zn(2+)(out) + ATP(in) + H2O(in) = Zn(2+)(in) + ADP(in) + phosphate(in) + H(+)(in). Part of the ABC transporter complex ZnuABC involved in zinc import. Responsible for energy coupling to the transport system. The polypeptide is Zinc import ATP-binding protein ZnuC (Haemophilus ducreyi (strain 35000HP / ATCC 700724)).